The sequence spans 116 residues: Aca2 repressor (116 aa).

Tyr-34 is a DNA binding site. His-92 is a binding site for Mg(2+).

As to quaternary structure, homodimer.

Functionally, represses the expression of the acrIF8-aca2 operon. Regulates the transcription and translation of phage anti-CRISPR acrIF8 gene (AC H9C181), which is necessary because the expression of this gene rises rapidely upon infection to enable evasion from host CRISPR-Cas defense but is probably toxic to the host cell. Aca2 repressor can inhibit acrIF8 transcriptionally through DNA binding to 2 inverted repeats in the promoter region and translationally by binding conserved RNA stem-loops on mRNAs thereby blocking ribosome access. Both modes of regulation together are essential for complete tight repression. This chain is Aca2 repressor, found in Pectobacterium carotovorum (Erwinia carotovora).